Here is a 532-residue protein sequence, read N- to C-terminus: Peptide chain release factor 3 (532 aa).

The tr-type G domain maps to 10–283 (QKRRTFAIIS…GILDWAPSPV (274 aa)). Residues 19–26 (SHPDAGKT), 87–91 (DTPGH), and 141–144 (NKLD) each bind GTP.

The protein belongs to the TRAFAC class translation factor GTPase superfamily. Classic translation factor GTPase family. PrfC subfamily.

It localises to the cytoplasm. Its function is as follows. Increases the formation of ribosomal termination complexes and stimulates activities of RF-1 and RF-2. It binds guanine nucleotides and has strong preference for UGA stop codons. It may interact directly with the ribosome. The stimulation of RF-1 and RF-2 is significantly reduced by GTP and GDP, but not by GMP. The sequence is that of Peptide chain release factor 3 (prfC) from Buchnera aphidicola subsp. Baizongia pistaciae (strain Bp).